We begin with the raw amino-acid sequence, 202 residues long: Thymidylate kinase (202 aa).

An ATP-binding site is contributed by 13-20 (GTDGAGKS).

This sequence belongs to the thymidylate kinase family.

The catalysed reaction is dTMP + ATP = dTDP + ADP. Its function is as follows. Phosphorylation of dTMP to form dTDP in both de novo and salvage pathways of dTTP synthesis. This is Thymidylate kinase from Desulfotalea psychrophila (strain LSv54 / DSM 12343).